A 448-amino-acid polypeptide reads, in one-letter code: FAD-dependent monooxygenase srdH (448 aa).

Residues glutamate 32 and arginine 107 each contribute to the FAD site. Glutamine 227 is an active-site residue. Aspartate 313 contacts FAD.

This sequence belongs to the paxM FAD-dependent monooxygenase family. Requires FAD as cofactor.

In terms of biological role, highly reducing polyketide synthase; part of the gene cluster that mediates the biosynthesis of sordarial, a salicylic aldehyde structurally related to the phytotoxin pyriculol. The most interesting aspect of this pathway is formation of an aromatic product from the highly reducing polyketide synthase srdA. SrdA synthesizes a reduced polyketide chain from one molecule of acetyl-CoA and five molecules of malonyl-CoA. The polyketide chain is then reductively released as an aldehyde. The oxidoreductases srdC, srdD and srdE then oxidize one of the hydroxy groups to facilitate the intramolecular aldol condensation, followed by dehydration to yield a salicylic aldehyde. This aldehyde can undergo facile reduction by endogenous reductases to yield the alcohol 1-hydroxy-2-hydroxymethyl-3-pent-1,3-dienylbenzene. The flavin-dependent srdI counteract against the propensity of the aldehydes to be reduced under physiological conditions and is responsible for reoxidizing 1-hydroxy-2-hydroxymethyl-3-pent-1,3-dienylbenzene back to the salicylic aldehyde. This salicylic aldehyde is then selectively epoxidized by the cupin-domain-containing oxidoreductase srdB to yield the epoxide, which can be hydrolyzed stereoselectively by the hydrolase srdG to give the final product sordarial. This Neurospora crassa (strain ATCC 24698 / 74-OR23-1A / CBS 708.71 / DSM 1257 / FGSC 987) protein is FAD-dependent monooxygenase srdH.